The sequence spans 299 residues: Glutamyl-Q tRNA(Asp) synthetase (299 aa).

Residues 9–13 (RFAPS) and Glu45 contribute to the L-glutamate site. A 'HIGH' region motif is present at residues 12–22 (PSPTGPLHFGS). Zn(2+)-binding residues include Cys101, Cys103, and Cys118. Residues Tyr170 and Arg188 each contribute to the L-glutamate site. Residues 226-230 (KLSKS) carry the 'KMSKS' region motif. Residue Lys229 participates in ATP binding.

The protein belongs to the class-I aminoacyl-tRNA synthetase family. GluQ subfamily. Zn(2+) is required as a cofactor.

Functionally, catalyzes the tRNA-independent activation of glutamate in presence of ATP and the subsequent transfer of glutamate onto a tRNA(Asp). Glutamate is transferred on the 2-amino-5-(4,5-dihydroxy-2-cyclopenten-1-yl) moiety of the queuosine in the wobble position of the QUC anticodon. The sequence is that of Glutamyl-Q tRNA(Asp) synthetase from Xanthomonas axonopodis pv. citri (strain 306).